The chain runs to 156 residues: Ribosomally synthesized cyclic peptide victorin precursosr vicA1 (156 aa).

The signal sequence occupies residues 1 to 21 (MVRITALMSGSILLFALQALA). 7 propeptides span residues 22–36 (MPVETTSVEPAAEKR), 43–55 (KRGEEVEPAEEKR), 62–74 (KRGEEVEPAEEKR), 81–93 (KRGEEVEPAEEKR), 100–112 (KRGEEVEPAEEKR), 119–131 (KRGEEVEPAEEKR), and 138–150 (KRGEEVEPAEEKR).

Post-translationally, vicA1 is processed by several endopeptidases including kexin proteases as well as the cluster-specific peptidases vicP1 and vicP2 to produce 7 identical copies of the hexapeptide Gly-Leu-Lys-Leu-Ala-Phe, that are further modified to yield victorins. After being excised from the precursor peptide, the core peptides are cyclized and modified post-translationally by enzymes encoded within the gene cluster. The ustYa family protein vicYb is required for the formation of the macrocycle in victorin and the copper amine oxidases (CAOs) vicK1 and vicK2 are responsible for converting victorin to the active form by oxidizing the N-terminal glycyl residue in the peptides to glyoxylate. Relaxed substrate specificity of enzymes in the victorin biosynthetic pathway results in a metabolic grid that produces a set of analogs including victorinines B, C, E or HV-toxin M.

Its pathway is mycotoxin biosynthesis. Ribosomally synthesized cyclic peptide victorin precursor, part of the gene cluster that mediates the biosynthesis of the secondary metabolite victorin, the molecular basis for Victoria blight of oats. The vicA1 translated product contains a 7-fold repeated peptide embedding the hexapeptide Gly-Leu-Lys-Leu-Ala-Phe, that is converted into the cyclic victorin. The polypeptide is Ribosomally synthesized cyclic peptide victorin precursosr vicA1 (Bipolaris victoriae (strain FI3) (Victoria blight of oats agent)).